The following is a 514-amino-acid chain: MVLDLDLFRVDKGGDPALIRETQEKRFKDPGLVDQLVKADSEWRRCRFRADNLNKLKNLCSKTIGEKMKKKEPVEDDESVPENVLNFDDLTADALANLKVSQIKKVRLLIDEAILKCDAERIKLEAERFENLREIGNLLHPSVPISNDEDADNKVERIWGDCTVRKKYSHVDLVVMVDGFEGEKGAVVAGSRGYFLKGVLVFLEQALIQYALRTLGSRGYTPIYTPFFMRKEVMQEVAQLSQFDEELYKVIGKGSEKSDDNSYDEKYLIATSEQPIAALHRDEWLRPEDLPIKYAGLSTCFRQEVGSHGRDTRGIFRVHQFEKIEQFVYSSPHDNKSWEMFEEMITTAEEFYQSLGIPYHIVNIVSGSLNHAASKKLDLEAWFPGSGAFRELVSCSNCTDYQARRLRIRYGQTKKMMDKVEFVHMLNATMCATTRTICAILENYQTEKGITVPEKLKEFMPPGLQELIPFVKPAPIDQEPSKKQKKQHEGSKKKAAARDVALESRLQNMEVTDA.

N-acetylmethionine is present on M1. The segment at 9-61 (RVDKGGDPALIRETQEKRFKDPGLVDQLVKADSEWRRCRFRADNLNKLKNLCS) is interaction with tRNA. S241 bears the Phosphoserine mark. 2 residues coordinate L-serine: T271 and R302. ATP contacts are provided by residues 302 to 304 (RQE) and 318 to 321 (VHQF). Position 323 is an N6-acetyllysine (K323). Position 325 (E325) interacts with L-serine. 391 to 394 (ELVS) contributes to the ATP binding site. Residue N427 coordinates L-serine. Residues 471–514 (VKPAPIDQEPSKKQKKQHEGSKKKAAARDVALESRLQNMEVTDA) form a disordered region. Positions 479–502 (EPSKKQKKQHEGSKKKAAARDVAL) are enriched in basic and acidic residues. Positions 482 to 494 (KKQKKQHEGSKKK) match the Nuclear localization signal motif. The span at 505–514 (RLQNMEVTDA) shows a compositional bias: polar residues.

It belongs to the class-II aminoacyl-tRNA synthetase family. Type-1 seryl-tRNA synthetase subfamily. Homodimer. The tRNA molecule may bind across the dimer. Interacts with SIRT2. Interacts with METTL6; interaction is required for the tRNA N(3)-methylcytidine methyltransferase activity of METTL6.

The protein resides in the cytoplasm. It is found in the nucleus. The enzyme catalyses tRNA(Ser) + L-serine + ATP = L-seryl-tRNA(Ser) + AMP + diphosphate + H(+). The catalysed reaction is tRNA(Sec) + L-serine + ATP = L-seryl-tRNA(Sec) + AMP + diphosphate + H(+). Its pathway is aminoacyl-tRNA biosynthesis; selenocysteinyl-tRNA(Sec) biosynthesis; L-seryl-tRNA(Sec) from L-serine and tRNA(Sec): step 1/1. In terms of biological role, catalyzes the attachment of serine to tRNA(Ser) in a two-step reaction: serine is first activated by ATP to form Ser-AMP and then transferred to the acceptor end of tRNA(Ser). Is probably also able to aminoacylate tRNA(Sec) with serine, to form the misacylated tRNA L-seryl-tRNA(Sec), which will be further converted into selenocysteinyl-tRNA(Sec). In the nucleus, binds to the VEGFA core promoter and prevents MYC binding and transcriptional activation by MYC. Recruits SIRT2 to the VEGFA promoter, promoting deacetylation of histone H4 at 'Lys-16' (H4K16). Thereby, inhibits the production of VEGFA and sprouting angiogenesis mediated by VEGFA. This is Serine--tRNA ligase, cytoplasmic (SARS1) from Macaca fascicularis (Crab-eating macaque).